A 139-amino-acid chain; its full sequence is D-ribose pyranase (139 aa).

His20 (proton donor) is an active-site residue. Substrate-binding positions include Asp28, His106, and 128–130; that span reads YAN.

Belongs to the RbsD / FucU family. RbsD subfamily. As to quaternary structure, homodecamer.

Its subcellular location is the cytoplasm. The enzyme catalyses beta-D-ribopyranose = beta-D-ribofuranose. The protein operates within carbohydrate metabolism; D-ribose degradation; D-ribose 5-phosphate from beta-D-ribopyranose: step 1/2. Functionally, catalyzes the interconversion of beta-pyran and beta-furan forms of D-ribose. The sequence is that of D-ribose pyranase from Cronobacter sakazakii (strain ATCC BAA-894) (Enterobacter sakazakii).